The chain runs to 248 residues: Putative mutator protein MutT4 (248 aa).

The segment at 1-64 is disordered; it reads MSDGEQAKSR…GSTRMRTVHE (64 aa). The span at 9-20 shows a compositional bias: basic residues; it reads SRRRRGRRRGRR. Residues 31–44 show a composition bias toward low complexity; sequence AQPAGDATPTPATA. The span at 45-57 shows a compositional bias: basic residues; that stretch reads KRSRSRSPRRGST. Residues 62 to 198 form the Nudix hydrolase domain; the sequence is VHETSAGGLV…DERRLAEVAD (137 aa). Residues glycine 103, glutamate 118, glutamate 121, and glutamate 122 each coordinate Mg(2+). Residues 103–124 carry the Nudix box motif; the sequence is GHIELGETAEQTAIREVAEETG. The disordered stretch occupies residues 204–248; sequence LQSDGPAALPPLPPSSPRRRPQTHSRARHADDSAPGQHNGPGPGP. The segment covering 220 to 230 has biased composition (basic residues); it reads PRRRPQTHSRA.

The protein belongs to the Nudix hydrolase family. Mg(2+) is required as a cofactor. The cofactor is Mn(2+).

May be involved in the GO system responsible for removing an oxidatively damaged form of guanine (7,8-dihydro-8-oxoguanine, 8-oxo-dGTP) from DNA and the nucleotide pool. In Mycobacterium tuberculosis (strain CDC 1551 / Oshkosh), this protein is Putative mutator protein MutT4 (mutT4).